Reading from the N-terminus, the 279-residue chain is Protease HtpX homolog (279 aa).

2 helical membrane-spanning segments follow: residues 6-26 and 29-49; these read VFVL…ALGG and GAIL…WGSS. H130 is a binding site for Zn(2+). The active site involves E131. H134 is a Zn(2+) binding site. A run of 2 helical transmembrane segments spans residues 145 to 165 and 176 to 196; these read IAAT…FFGG and VAGI…QFAI. E201 lines the Zn(2+) pocket.

The protein belongs to the peptidase M48B family. Zn(2+) is required as a cofactor.

The protein resides in the cell inner membrane. This Gemmatimonas aurantiaca (strain DSM 14586 / JCM 11422 / NBRC 100505 / T-27) protein is Protease HtpX homolog.